The primary structure comprises 171 residues: MEQQSSYNKEELLSCGRGELFGPGNAQLPLPPMLMFDRITHISEEGGAYGKGEIRAELDVKKDLWFFECHFNDDPVMPGCLGLDAMWQLIGFFLGWTGGPGRGRALGAGEVKFYGQVLPTAKKVEYVINMKRVIKRKLYMGIGDAHLYVDGREIYSADDLKVGLFTNTDNF.

The active site involves H70.

This sequence belongs to the thioester dehydratase family. FabA subfamily. As to quaternary structure, homodimer.

The protein localises to the cytoplasm. The enzyme catalyses a (3R)-hydroxyacyl-[ACP] = a (2E)-enoyl-[ACP] + H2O. It catalyses the reaction (3R)-hydroxydecanoyl-[ACP] = (2E)-decenoyl-[ACP] + H2O. The catalysed reaction is (2E)-decenoyl-[ACP] = (3Z)-decenoyl-[ACP]. It participates in lipid metabolism; fatty acid biosynthesis. In terms of biological role, necessary for the introduction of cis unsaturation into fatty acids. Catalyzes the dehydration of (3R)-3-hydroxydecanoyl-ACP to E-(2)-decenoyl-ACP and then its isomerization to Z-(3)-decenoyl-ACP. Can catalyze the dehydratase reaction for beta-hydroxyacyl-ACPs with saturated chain lengths up to 16:0, being most active on intermediate chain length. This chain is 3-hydroxydecanoyl-[acyl-carrier-protein] dehydratase, found in Hydrogenovibrio crunogenus (strain DSM 25203 / XCL-2) (Thiomicrospira crunogena).